The primary structure comprises 280 residues: uncharacterized protein (280 aa).

The next 3 helical transmembrane spans lie at 10–29 (IQQN…LLFN), 164–186 (FVFV…FAFI), and 209–228 (IFGL…YFLL).

The protein resides in the cell membrane. This is an uncharacterized protein from Bacillus subtilis (strain 168).